The sequence spans 104 residues: Large ribosomal subunit protein eL42 (104 aa).

It belongs to the eukaryotic ribosomal protein eL42 family. In terms of assembly, component of the large ribosomal subunit. Mature ribosomes consist of a small (40S) and a large (60S) subunit. The 40S subunit contains about 32 different proteins and 1 molecule of RNA (18S). The 60S subunit contains about 42 different proteins and 3 molecules of RNA (28S, 5.8S and 5S).

The protein resides in the cytoplasm. Component of the ribosome, a large ribonucleoprotein complex responsible for the synthesis of proteins in the cell. The small ribosomal subunit (SSU) binds messenger RNAs (mRNAs) and translates the encoded message by selecting cognate aminoacyl-transfer RNA (tRNA) molecules. The large subunit (LSU) contains the ribosomal catalytic site termed the peptidyl transferase center (PTC), which catalyzes the formation of peptide bonds, thereby polymerizing the amino acids delivered by tRNAs into a polypeptide chain. The nascent polypeptides leave the ribosome through a tunnel in the LSU and interact with protein factors that function in enzymatic processing, targeting, and the membrane insertion of nascent chains at the exit of the ribosomal tunnel. This chain is Large ribosomal subunit protein eL42, found in Plasmodium falciparum (isolate 3D7).